We begin with the raw amino-acid sequence, 839 residues long: ABC transporter A family member 7 (839 aa).

The next 7 membrane-spanning stretches (helical) occupy residues Gly-30 to Ile-50, Ile-238 to Phe-258, Ile-286 to Ile-306, Phe-321 to Leu-341, Ser-352 to Phe-372, Val-378 to Leu-398, and Ile-419 to Lys-439. Residues Leu-525–Asp-756 enclose the ABC transporter domain. Gly-559 to Thr-566 contacts ATP.

It belongs to the ABC transporter superfamily. ABCA family.

Its subcellular location is the membrane. This Dictyostelium discoideum (Social amoeba) protein is ABC transporter A family member 7 (abcA7).